An 863-amino-acid chain; its full sequence is DNA mismatch repair protein MutS (863 aa).

615 to 622 (GPNMAGKS) serves as a coordination point for ATP.

The protein belongs to the DNA mismatch repair MutS family.

This protein is involved in the repair of mismatches in DNA. It is possible that it carries out the mismatch recognition step. This protein has a weak ATPase activity. The polypeptide is DNA mismatch repair protein MutS (Pelotomaculum thermopropionicum (strain DSM 13744 / JCM 10971 / SI)).